The primary structure comprises 67 residues: DNA-directed RNA polymerase subunit omega (67 aa).

The protein belongs to the RNA polymerase subunit omega family. The RNAP catalytic core consists of 2 alpha, 1 beta, 1 beta' and 1 omega subunit. When a sigma factor is associated with the core the holoenzyme is formed, which can initiate transcription.

The enzyme catalyses RNA(n) + a ribonucleoside 5'-triphosphate = RNA(n+1) + diphosphate. Functionally, promotes RNA polymerase assembly. Latches the N- and C-terminal regions of the beta' subunit thereby facilitating its interaction with the beta and alpha subunits. This is DNA-directed RNA polymerase subunit omega from Listeria welshimeri serovar 6b (strain ATCC 35897 / DSM 20650 / CCUG 15529 / CIP 8149 / NCTC 11857 / SLCC 5334 / V8).